We begin with the raw amino-acid sequence, 576 residues long: 4-alpha-glucanotransferase DPE1, chloroplastic/amyloplastic (576 aa).

Residues 1–45 constitute a chloroplast transit peptide; sequence MSILLRPSSSPSLCSSLKLFRLSSPDSLIDAAVLRNRTKPSQSFR.

It belongs to the disproportionating enzyme family.

The protein resides in the plastid. It localises to the chloroplast. It is found in the amyloplast. It catalyses the reaction Transfers a segment of a (1-&gt;4)-alpha-D-glucan to a new position in an acceptor, which may be glucose or a (1-&gt;4)-alpha-D-glucan.. Functionally, chloroplastic alpha-glucanotransferase involved in maltotriose metabolism. Probably uses maltotriose as substrate to transfer a maltosyl unit from one molecule to another, resulting in glucose and maltopentaose. The latter can then be further metabolized to maltose and maltotriose by beta-amylase. Required for normal starch degradation in leaves. This chain is 4-alpha-glucanotransferase DPE1, chloroplastic/amyloplastic (DPE1), found in Arabidopsis thaliana (Mouse-ear cress).